The chain runs to 259 residues: Protein unc-50 homolog (259 aa).

Positions 1–15 (MLPTSSPQIHRNGSL) are enriched in polar residues. A disordered region spans residues 1–22 (MLPTSSPQIHRNGSLSERDAAR). Residues 1-80 (MLPTSSPQIH…TKDQWARDDP (80 aa)) are Cytoplasmic-facing. A helical transmembrane segment spans residues 81–101 (AFLVLLSIWLCVSTVGFGLVL). Residues 102–110 (DMGFVETLT) are Lumenal-facing. Residues 111 to 131 (LLLWVVFIDCIGVGLLISTLM) form a helical membrane-spanning segment. The Cytoplasmic portion of the chain corresponds to 132–162 (WFVTNKYLMKHPNRDYDVEWGYAFDVHLNAF). A helical transmembrane segment spans residues 163–183 (YPLLVILHFLQLFFINHVVVI). Residues 184–198 (SSDWFLGYFVGNTMW) lie on the Lumenal side of the membrane. A helical transmembrane segment spans residues 199–219 (LIAIGYYVYITFLGYSALPFL). At 220-222 (KNT) the chain is on the cytoplasmic side. Residues 223-243 (VVLLYPFALLGLLYVLSISLG) form a helical membrane-spanning segment. Topologically, residues 244–259 (WNFTKGLCWFYKHRVQ) are lumenal.

This sequence belongs to the unc-50 family.

The protein localises to the nucleus inner membrane. Its subcellular location is the golgi apparatus membrane. Involved in the cell surface expression of neuronal nicotinic receptors. Binds RNA. The polypeptide is Protein unc-50 homolog (unc50) (Danio rerio (Zebrafish)).